The sequence spans 123 residues: Large ribosomal subunit protein uL29 (123 aa).

K19 carries the N6-acetyllysine modification. K25 is covalently cross-linked (Glycyl lysine isopeptide (Lys-Gly) (interchain with G-Cter in SUMO2)). Residue S29 is modified to Phosphoserine. Position 43 is an N6-acetyllysine (K43). The interval 95–114 (LNKHEENLKTKKQQRKERLY) is disordered.

It belongs to the universal ribosomal protein uL29 family. Component of the large ribosomal subunit.

Its subcellular location is the cytoplasm. Functionally, component of the large ribosomal subunit. The ribosome is a large ribonucleoprotein complex responsible for the synthesis of proteins in the cell. The protein is Large ribosomal subunit protein uL29 (RPL35) of Bos taurus (Bovine).